Reading from the N-terminus, the 477-residue chain is Glutamyl-tRNA reductase (477 aa).

Substrate is bound by residues 49–52 (TCNR), S109, 114–116 (EQQ), and Q120. Residue C50 is the Nucleophile of the active site. 189–194 (GAGAMG) contributes to the NADP(+) binding site.

It belongs to the glutamyl-tRNA reductase family. As to quaternary structure, homodimer.

It catalyses the reaction (S)-4-amino-5-oxopentanoate + tRNA(Glu) + NADP(+) = L-glutamyl-tRNA(Glu) + NADPH + H(+). It functions in the pathway porphyrin-containing compound metabolism; protoporphyrin-IX biosynthesis; 5-aminolevulinate from L-glutamyl-tRNA(Glu): step 1/2. In terms of biological role, catalyzes the NADPH-dependent reduction of glutamyl-tRNA(Glu) to glutamate 1-semialdehyde (GSA). The polypeptide is Glutamyl-tRNA reductase (Nocardia farcinica (strain IFM 10152)).